We begin with the raw amino-acid sequence, 52 residues long: GKSEEELAEFFRIFDKNADGYIDAEELAEIIRSSGEHVTDEEIEELMKDGDK.

EF-hand domains are found at residues 2–37 and 38–52; these read KSEEELAEFFRIFDKNADGYIDAEELAEIIRSSGEH and VTDEEIEELMKDGDK. 5 residues coordinate Ca(2+): D15, N17, D19, Y21, and E26.

Belongs to the troponin C family.

Its function is as follows. Troponin is the central regulatory protein of striated muscle contraction. Tn consists of three components: Tn-I which is the inhibitor of actomyosin ATPase, Tn-T which contains the binding site for tropomyosin and Tn-C. The binding of calcium to Tn-C abolishes the inhibitory action of Tn on actin filaments. The chain is Troponin C, skeletal muscle from Protopterus dolloi (Slender lungfish).